We begin with the raw amino-acid sequence, 383 residues long: Sterol 24-C-methyltransferase ERG6 (383 aa).

Residue Ser-2 is modified to N-acetylserine. Phosphoserine is present on Ser-99.

This sequence belongs to the class I-like SAM-binding methyltransferase superfamily. Erg6/SMT family. In terms of assembly, interacts with ERG28.

It localises to the microsome. It is found in the mitochondrion. The catalysed reaction is zymosterol + S-adenosyl-L-methionine = fecosterol + S-adenosyl-L-homocysteine + H(+). It participates in steroid metabolism; ergosterol biosynthesis; ergosterol from zymosterol: step 1/5. Sterol 24-C-methyltransferase; part of the third module of ergosterol biosynthesis pathway that includes the late steps of the pathway. ERG6 catalyzes the methyl transfer from S-adenosyl-methionine to the C-24 of zymosterol to form fecosterol. The third module or late pathway involves the ergosterol synthesis itself through consecutive reactions that mainly occur in the endoplasmic reticulum (ER) membrane. Firstly, the squalene synthase ERG9 catalyzes the condensation of 2 farnesyl pyrophosphate moieties to form squalene, which is the precursor of all steroids. Squalene synthase is crucial for balancing the incorporation of farnesyl diphosphate (FPP) into sterol and nonsterol isoprene synthesis. Secondly, the squalene epoxidase ERG1 catalyzes the stereospecific oxidation of squalene to (S)-2,3-epoxysqualene, which is considered to be a rate-limiting enzyme in steroid biosynthesis. Then, the lanosterol synthase ERG7 catalyzes the cyclization of (S)-2,3 oxidosqualene to lanosterol, a reaction that forms the sterol core. In the next steps, lanosterol is transformed to zymosterol through a complex process involving various demethylation, reduction and desaturation reactions. The lanosterol 14-alpha-demethylase ERG11 (also known as CYP51) catalyzes C14-demethylation of lanosterol to produce 4,4'-dimethyl cholesta-8,14,24-triene-3-beta-ol, which is critical for ergosterol biosynthesis. The C-14 reductase ERG24 reduces the C14=C15 double bond of 4,4-dimethyl-cholesta-8,14,24-trienol to produce 4,4-dimethyl-cholesta-8,24-dienol. 4,4-dimethyl-cholesta-8,24-dienol is substrate of the C-4 demethylation complex ERG25-ERG26-ERG27 in which ERG25 catalyzes the three-step monooxygenation required for the demethylation of 4,4-dimethyl and 4alpha-methylsterols, ERG26 catalyzes the oxidative decarboxylation that results in a reduction of the 3-beta-hydroxy group at the C-3 carbon to an oxo group, and ERG27 is responsible for the reduction of the keto group on the C-3. ERG28 has a role as a scaffold to help anchor ERG25, ERG26 and ERG27 to the endoplasmic reticulum and ERG29 regulates the activity of the iron-containing C4-methylsterol oxidase ERG25. Then, the sterol 24-C-methyltransferase ERG6 catalyzes the methyl transfer from S-adenosyl-methionine to the C-24 of zymosterol to form fecosterol. The C-8 sterol isomerase ERG2 catalyzes the reaction which results in unsaturation at C-7 in the B ring of sterols and thus converts fecosterol to episterol. The sterol-C5-desaturase ERG3 then catalyzes the introduction of a C-5 double bond in the B ring to produce 5-dehydroepisterol. The C-22 sterol desaturase ERG5 further converts 5-dehydroepisterol into ergosta-5,7,22,24(28)-tetraen-3beta-ol by forming the C-22(23) double bond in the sterol side chain. Finally, ergosta-5,7,22,24(28)-tetraen-3beta-ol is substrate of the C-24(28) sterol reductase ERG4 to produce ergosterol. This Saccharomyces cerevisiae (strain ATCC 204508 / S288c) (Baker's yeast) protein is Sterol 24-C-methyltransferase ERG6.